The chain runs to 133 residues: Small ribosomal subunit protein uS8 (133 aa).

It belongs to the universal ribosomal protein uS8 family. As to quaternary structure, part of the 30S ribosomal subunit. Contacts proteins S5 and S12.

Its function is as follows. One of the primary rRNA binding proteins, it binds directly to 16S rRNA central domain where it helps coordinate assembly of the platform of the 30S subunit. This chain is Small ribosomal subunit protein uS8, found in Endomicrobium trichonymphae.